An 825-amino-acid chain; its full sequence is Trimethylamine-N-oxide reductase (825 aa).

The segment at residues 1–40 is a signal peptide (tat-type signal); sequence MKKNNVNEQRRDFLKKTSLGVAGSALSGGMVGVVSKSAVA. Serine 187 lines the Mo-bis(molybdopterin guanine dinucleotide) pocket.

It belongs to the prokaryotic molybdopterin-containing oxidoreductase family. Mo-bis(molybdopterin guanine dinucleotide) is required as a cofactor. In terms of processing, predicted to be exported by the Tat system. The position of the signal peptide cleavage has not been experimentally proven.

Its subcellular location is the periplasm. It carries out the reaction trimethylamine + 2 Fe(III)-[cytochrome c] + H2O = trimethylamine N-oxide + 2 Fe(II)-[cytochrome c] + 3 H(+). Functionally, reduces trimethylamine-N-oxide (TMAO) into trimethylamine; an anaerobic reaction coupled to energy-yielding reactions. The polypeptide is Trimethylamine-N-oxide reductase (torZ) (Haemophilus influenzae (strain ATCC 51907 / DSM 11121 / KW20 / Rd)).